The chain runs to 304 residues: Arginine-binding protein ArgT (304 aa).

Residues 1-26 (MRFPKIPKRAVAATVGIVATSFTLAS) form the signal peptide. Residue C27 is the site of N-palmitoyl cysteine attachment. Residue C27 is the site of S-diacylglycerol cysteine attachment.

This sequence belongs to the bacterial solute-binding protein 3 family. In terms of assembly, the complex is probably composed of two ATP-binding proteins (ArgV), two transmembrane proteins (ArgU) and a solute-binding protein (ArgT).

The protein localises to the cell membrane. Functionally, part of the ABC transporter complex ArgTUV involved in L-arginine import. May also transport L-citrulline. Binds L-arginine and its molecular precursor L-citrulline, but not L-histidine, L-glutamate, L-glutamine, L-lysine or L-cysteine. The sequence is that of Arginine-binding protein ArgT from Corynebacterium glutamicum (strain ATCC 13032 / DSM 20300 / JCM 1318 / BCRC 11384 / CCUG 27702 / LMG 3730 / NBRC 12168 / NCIMB 10025 / NRRL B-2784 / 534).